Reading from the N-terminus, the 292-residue chain is D-alanyl-D-alanine endopeptidase (292 aa).

An N-terminal signal peptide occupies residues 1 to 18; sequence MFKKALFILSLCPSFALA. Serine 45 serves as the catalytic Acyl-ester intermediate. Lysine 48 acts as the Proton acceptor in catalysis. Serine 102 is an active-site residue. Lysine 207 provides a ligand contact to substrate.

The protein belongs to the peptidase S11 family.

The protein localises to the periplasm. Cell wall formation. May play a specialized role in remodeling the cell wall. Specifically hydrolyzes the DD-diaminopimelate-alanine bonds in high-molecular-mass murein sacculi. The polypeptide is D-alanyl-D-alanine endopeptidase (pbpG) (Haemophilus influenzae (strain ATCC 51907 / DSM 11121 / KW20 / Rd)).